The following is an 80-amino-acid chain: Myocilin opposite strand protein (80 aa).

A disordered region spans residues 53–80 (EQAPPPHRTYLTVPPAPPPSPAEDPTVS).

The polypeptide is Myocilin opposite strand protein (Homo sapiens (Human)).